The sequence spans 207 residues: Outer-membrane lipoprotein LolB (207 aa).

An N-terminal signal peptide occupies residues 1–23 (MPTMNRSRRLALLCLGAPLLLAA). C24 carries the N-palmitoyl cysteine lipid modification. Residue C24 is the site of S-diacylglycerol cysteine attachment. The interval 171-207 (PSASQAPAPRPRRIDLEREGGPTPLAVKLVIDPEEAP) is disordered.

This sequence belongs to the LolB family. As to quaternary structure, monomer.

The protein resides in the cell outer membrane. Functionally, plays a critical role in the incorporation of lipoproteins in the outer membrane after they are released by the LolA protein. This chain is Outer-membrane lipoprotein LolB, found in Cupriavidus pinatubonensis (strain JMP 134 / LMG 1197) (Cupriavidus necator (strain JMP 134)).